A 152-amino-acid polypeptide reads, in one-letter code: UPF0225 protein YchJ (152 aa).

This sequence belongs to the UPF0225 family.

The chain is UPF0225 protein YchJ from Shigella dysenteriae serotype 1 (strain Sd197).